We begin with the raw amino-acid sequence, 690 residues long: Eukaryotic translation initiation factor 3 subunit B (690 aa).

Over residues 1 to 11 (MAKKKSEDHSG) the composition is skewed to basic and acidic residues. The tract at residues 1-37 (MAKKKSEDHSGGDANDSDYNEEPNFEDPPNFVDNISD) is disordered. Positions 15 to 25 (NDSDYNEEPNF) are enriched in acidic residues. The 85-residue stretch at 57-141 (SVVVVDNIPK…HTFAVNLFTD (85 aa)) folds into the RRM domain. 6 WD repeats span residues 207–246 (TRERFTDTFVKWSPLGTYVVTFHKPGVAIWGGSSFQKIQK), 247–289 (FPHT…EKRS), 293–331 (DGMSVLSMFRWSHDDKYVARMGDNSIHIYETPSFYLLDL), 334–369 (IKIPGIRGFSWSPTDNVIAYWVEEQNQIPARVTLME), 442–484 (EIRE…KPSL), and 530–575 (PDHF…IKRT). Residues 614–645 (QKDRLRLTRASKELLEKRSQLRETFMEYRNKR) adopt a coiled-coil conformation.

Belongs to the eIF-3 subunit B family. Component of the eukaryotic translation initiation factor 3 (eIF-3) complex. The eIF-3 complex interacts with pix. Interacts with mxt.

It localises to the cytoplasm. RNA-binding component of the eukaryotic translation initiation factor 3 (eIF-3) complex, which is involved in protein synthesis of a specialized repertoire of mRNAs and, together with other initiation factors, stimulates binding of mRNA and methionyl-tRNAi to the 40S ribosome. The eIF-3 complex specifically targets and initiates translation of a subset of mRNAs involved in cell proliferation. In Drosophila pseudoobscura pseudoobscura (Fruit fly), this protein is Eukaryotic translation initiation factor 3 subunit B.